The following is a 617-amino-acid chain: ATP-dependent RNA helicase DBP1 (617 aa).

The interval 1 to 90 is disordered; sequence MADLPQKVSN…TSANYNRGGS (90 aa). Residues 7–17 are compositionally biased toward polar residues; that stretch reads KVSNLSINNKE. A compositionally biased stretch (basic and acidic residues) spans 38-58; it reads PSFERSTPKQEDKVTGGDFFR. Residues 79 to 90 are compositionally biased toward polar residues; it reads GGTSANYNRGGS. The short motif at 154 to 182 is the Q motif element; it reads LDFSSPPLDELLMENIKLASFTKPTPVQK. The 190-residue stretch at 185–374 folds into the Helicase ATP-binding domain; sequence IPIVTKGRDL…RDFLDNYIFL (190 aa). 198–205 is an ATP binding site; it reads AQTGSGKT. The DEAD box signature appears at 318 to 321; it reads DEAD. Residues 385–545 form the Helicase C-terminal domain; it reads NITQRILYVD…EVPTFLSDLS (161 aa). The tract at residues 542-617 is disordered; the sequence is SDLSRQNSRG…GYGNSNASWW (76 aa). Residues 580-594 show a composition bias toward polar residues; it reads FGSTRPRNTGTSNWG.

The protein belongs to the DEAD box helicase family. DDX3/DED1 subfamily.

It is found in the cytoplasm. The enzyme catalyses ATP + H2O = ADP + phosphate + H(+). Its function is as follows. ATP-binding RNA helicase involved in translation initiation. Remodels RNA in response to ADP and ATP concentrations by facilitating disruption, but also formation of RNA duplexes. Redundant to DED1, may be required in conditions in which DED1 expression is decreased. The sequence is that of ATP-dependent RNA helicase DBP1 (DBP1) from Saccharomyces cerevisiae (strain ATCC 204508 / S288c) (Baker's yeast).